Consider the following 382-residue polypeptide: Homoserine O-acetyltransferase (382 aa).

Residues 52–356 enclose the AB hydrolase-1 domain; the sequence is NVVMVLHALT…TYGHDGFLVE (305 aa). Catalysis depends on Ser157, which acts as the Nucleophile. Arg227 contributes to the substrate binding site. Residues Asp320 and His350 contribute to the active site. Asp351 is a binding site for substrate.

It belongs to the AB hydrolase superfamily. MetX family. As to quaternary structure, homodimer.

It localises to the cytoplasm. It carries out the reaction L-homoserine + acetyl-CoA = O-acetyl-L-homoserine + CoA. It participates in amino-acid biosynthesis; L-methionine biosynthesis via de novo pathway; O-acetyl-L-homoserine from L-homoserine: step 1/1. Its function is as follows. Transfers an acetyl group from acetyl-CoA to L-homoserine, forming acetyl-L-homoserine. The chain is Homoserine O-acetyltransferase from Mycobacterium leprae (strain TN).